The primary structure comprises 280 residues: Phosphatidylinositol N-acetylglucosaminyltransferase GPI2 subunit (280 aa).

The Cytoplasmic segment spans residues 1–53 (MTRSPWKRLLWLKQEYPDNYTDPSFIELRARQKAESNQKSDRKLSEAARAQIR). The chain crosses the membrane as a helical span at residues 54–74 (LDFISFYQTILNTSFIYITFT). Position 75 (Tyr-75) is a topological domain, extracellular. A helical membrane pass occupies residues 76-96 (IYYYGFDPIPPTIFLSFITLI). At 97–108 (ISRTKVDPLLSS) the chain is on the cytoplasmic side. The chain crosses the membrane as a helical span at residues 109–129 (FMDVKSSLIITFAMLTLSPVL). Over 130-135 (KSLSKT) the chain is Extracellular. A helical membrane pass occupies residues 136–156 (TASDSIWTLSFWLTLWYIFVI). Over 157–189 (SSTKSKDKPSNLSTNILVALVAVLSSRLSTTID) the chain is Cytoplasmic. A helical membrane pass occupies residues 190–210 (VFCFLLICIQLNIILPTYLSV). Residues 211–220 (TNKVVPIISN) are Extracellular-facing. Residues 221-241 (IIVYSFLNVALGWIYMLLIFF) traverse the membrane as a helical segment. Residues 242–280 (ASVFYITVLPKWFIYWKINYHKRDNDLLSTWDARTPILD) lie on the Cytoplasmic side of the membrane.

This sequence belongs to the PIGC family. In terms of assembly, component of the phosphatidylinositol N-acetylglucosaminyltransferase (GPI-GlcNAc transferase) complex composed of at least GPI1, GPI2, GPI3, GPI15, GPI19 and ERI1. Interacts with ERI1.

It is found in the membrane. It catalyses the reaction a 1,2-diacyl-sn-glycero-3-phospho-(1D-myo-inositol) + UDP-N-acetyl-alpha-D-glucosamine = a 6-(N-acetyl-alpha-D-glucosaminyl)-1-(1,2-diacyl-sn-glycero-3-phospho)-1D-myo-inositol + UDP + H(+). It participates in glycolipid biosynthesis; glycosylphosphatidylinositol-anchor biosynthesis. Functionally, part of the complex catalyzing the transfer of N-acetylglucosamine from UDP-N-acetylglucosamine to phosphatidylinositol, the first step of GPI biosynthesis. The protein is Phosphatidylinositol N-acetylglucosaminyltransferase GPI2 subunit (GPI2) of Saccharomyces cerevisiae (strain ATCC 204508 / S288c) (Baker's yeast).